The primary structure comprises 646 residues: Capsid scaffolding protein (646 aa).

Active-site charge relay system residues include histidine 55, serine 123, and histidine 142. An interaction with pAP region spans residues 336 to 355 (GDYILVPAAQYNQLVVGQHT). The disordered stretch occupies residues 421 to 483 (TKGSDPHVIQ…RPGERRAGRP (63 aa)). A Nuclear localization signal motif is present at residues 445-451 (RYARKRR). 2 stretches are compositionally biased toward basic and acidic residues: residues 452–462 (HDWDATTRDDL) and 471–480 (RSPRPGERRA). Residues 626–646 (TGLEFGRDDADIFVSQMMSAR) form an interaction with major capsid protein region.

It belongs to the herpesviridae capsid scaffolding protein family. As to quaternary structure, homomultimer. Interacts with major capsid protein. Exists in a monomer-dimer equilibrium with the dimer being the active species. In terms of processing, capsid scaffolding protein is cleaved by assemblin after formation of the spherical procapsid. As a result, the capsid obtains its mature, icosahedral shape. Cleavages occur at two or more sites: release (R-site) and maturation (M-site).

It is found in the host cytoplasm. It localises to the host nucleus. The catalysed reaction is Cleaves -Ala-|-Ser- and -Ala-|-Ala- bonds in the scaffold protein.. Its function is as follows. Acts as a scaffold protein by binding major capsid protein in the cytoplasm, inducing the nuclear localization of both proteins. Multimerizes in the nucleus such as major capsid protein forms the icosahedral T=16 capsid. Autocatalytic cleavage releases the assembly protein, and subsequently abolishes interaction with major capsid protein. Cleavages products are evicted from the capsid before or during DNA packaging. Protease that plays an essential role in virion assembly within the nucleus. Catalyzes the cleavage of the assembly protein after formation of the spherical procapsid. By that cleavage, the capsid matures and gains its icosahedral shape. The cleavage sites seem to include -Ala-Ser-, -Ala-Ala-, as well as Ala-Thr bonds. Assemblin and cleavages products are evicted from the capsid before or during DNA packaging. In terms of biological role, plays a major role in capsid assembly. Acts as a scaffold protein by binding major capsid protein. Multimerizes in the nucleus such as major capsid protein forms the icosahedral T=16 capsid. Cleaved by assemblin after capsid completion. The cleavages products are evicted from the capsid before or during DNA packaging. This Equus caballus (Horse) protein is Capsid scaffolding protein (35).